Here is a 103-residue protein sequence, read N- to C-terminus: Integration host factor subunit beta (103 aa).

This sequence belongs to the bacterial histone-like protein family. Heterodimer of an alpha and a beta chain.

Its function is as follows. This protein is one of the two subunits of integration host factor, a specific DNA-binding protein that functions in genetic recombination as well as in transcriptional and translational control. The chain is Integration host factor subunit beta from Rhizobium meliloti (strain 1021) (Ensifer meliloti).